The following is a 191-amino-acid chain: dTTP/UTP pyrophosphatase (191 aa).

The Proton acceptor role is filled by D69.

This sequence belongs to the Maf family. YhdE subfamily. A divalent metal cation is required as a cofactor.

The protein localises to the cytoplasm. It catalyses the reaction dTTP + H2O = dTMP + diphosphate + H(+). It carries out the reaction UTP + H2O = UMP + diphosphate + H(+). Nucleoside triphosphate pyrophosphatase that hydrolyzes dTTP and UTP. May have a dual role in cell division arrest and in preventing the incorporation of modified nucleotides into cellular nucleic acids. The sequence is that of dTTP/UTP pyrophosphatase from Pelotomaculum thermopropionicum (strain DSM 13744 / JCM 10971 / SI).